The following is a 73-amino-acid chain: U3-agatoxin-Ao1i (73 aa).

A signal peptide spans 1–20 (MRTIISLLLLSAMVFAEIEA). Positions 21-34 (ISLEEGLQLFEGER) are excised as a propeptide. 4 disulfide bridges follow: C36–C52, C43–C57, C51–C67, and C59–C65. S71 carries the serine amide modification.

Belongs to the neurotoxin 07 (Beta/delta-agtx) family. 03 (aga-4) subfamily. Aga sub-subfamily. As to expression, expressed by the venom gland.

The protein localises to the secreted. Functionally, insecticidal neurotoxin that induces an irreversible spastic paralysis when injected into insects. Modifies presynaptic voltage-gated sodium channels (Nav), causing them to open at the normal resting potential of the nerve. This leads to spontaneous release of neurotransmitter and repetitive action potentials in motor neurons. This chain is U3-agatoxin-Ao1i, found in Agelena orientalis (Funnel-web spider).